Here is a 333-residue protein sequence, read N- to C-terminus: Nuclear egress protein 1 (333 aa).

Positions 45-64 (SRRYKSVSRSGPSMRVRSRT) are disordered. The segment at 128–251 (CLSLSGMGYH…YVIFPGKSVH (124 aa)) adopts a CCCH-type zinc-finger fold.

It belongs to the herpesviridae NEC1 protein family. In terms of assembly, forms a heterohexameric complex with NEC2. Interacts with capsid vertex specific component 2/CVC2; this interaction directs the capsid to the host inner nuclear membrane to initiate budding. Post-translationally, phosphorylated at serine residues in the N-terminus. This phosphorylation regulates the localization within the inner nuclear membrane.

The protein resides in the host nucleus inner membrane. Functionally, plays an essential role in virion nuclear egress, the first step of virion release from infected cell. Within the host nucleus, NEC1 interacts with the newly formed capsid through the vertexes and directs it to the inner nuclear membrane by associating with NEC2. Induces the budding of the capsid at the inner nuclear membrane as well as its envelopment into the perinuclear space. There, the NEC1/NEC2 complex promotes the fusion of the enveloped capsid with the outer nuclear membrane and the subsequent release of the viral capsid into the cytoplasm where it will reach the secondary budding sites in the host Golgi or trans-Golgi network. This is Nuclear egress protein 1 from Varicella-zoster virus (strain Dumas) (HHV-3).